The chain runs to 296 residues: Cobalamin trafficking protein CblD (296 aa).

A mitochondrion-targeting transit peptide spans 1–38 (MANVLCNRARLVSYLPGFCSLVKRVVNPKAFSTAGSSG). Lys203 carries the N6-acetyllysine modification.

Heterodimer with MMACHC. Forms a multiprotein complex with MMACHC, MTR and MTRR. In terms of tissue distribution, widely expressed at high levels.

The protein localises to the cytoplasm. The protein resides in the mitochondrion. Involved in cobalamin metabolism and trafficking. Plays a role in regulating the biosynthesis and the proportion of two coenzymes, methylcob(III)alamin (MeCbl) and 5'-deoxyadenosylcobalamin (AdoCbl). Promotes oxidation of cob(II)alamin bound to MMACHC. The processing of cobalamin in the cytosol occurs in a multiprotein complex composed of at least MMACHC, MMADHC, MTRR (methionine synthase reductase) and MTR (methionine synthase) which may contribute to shuttle safely and efficiently cobalamin towards MTR in order to produce methionine. This chain is Cobalamin trafficking protein CblD, found in Homo sapiens (Human).